A 382-amino-acid polypeptide reads, in one-letter code: SPRY domain-containing protein C285.10c (382 aa).

Residues 21 to 41 (LAILFIFIALAAVIVLLICLL) traverse the membrane as a helical segment. The B30.2/SPRY domain occupies 79–284 (GFSLLDDMGK…LHVNLGQAGY (206 aa)). A disordered region spans residues 304-382 (APPPSYSTSQ…MHSMPATDEV (79 aa)). 2 stretches are compositionally biased toward polar residues: residues 309-334 (YSTS…QGDT) and 361-372 (FSPSSSNNQAYQ).

It is found in the cytoplasm. It localises to the membrane. The sequence is that of SPRY domain-containing protein C285.10c from Schizosaccharomyces pombe (strain 972 / ATCC 24843) (Fission yeast).